A 316-amino-acid polypeptide reads, in one-letter code: Retinol dehydrogenase 11 (316 aa).

Residues 1 to 21 form a helical; Signal-anchor for type II membrane protein membrane-spanning segment; sequence MFGFLLLLSLPFILYLVTPKI. Topologically, residues 22–316 are cytoplasmic; that stretch reads RKMLSSGVCT…CDLLGLPVDW (295 aa). NADP(+) is bound at residue 45–51; the sequence is GANTGIG. An N6-acetyllysine modification is found at K109. S174 is a binding site for substrate. The Proton acceptor role is filled by Y199.

Belongs to the short-chain dehydrogenases/reductases (SDR) family. In terms of processing, not glycosylated. In terms of tissue distribution, expressed at high level in liver and testis. Expressed at lower levels in smooth muscle, thymus, submaxillary gland and epididymis. In testis, expression is restricted to pachytene spermatocytes. Also expressed in four layers of the retina, including the outer segment of rods and cones.

The protein localises to the endoplasmic reticulum membrane. The catalysed reaction is all-trans-retinol + NADP(+) = all-trans-retinal + NADPH + H(+). It catalyses the reaction 11-cis-retinol + NADP(+) = 11-cis-retinal + NADPH + H(+). It carries out the reaction 9-cis-retinol + NADP(+) = 9-cis-retinal + NADPH + H(+). The enzyme catalyses 13-cis-retinol + NADP(+) = 13-cis-retinal + NADPH + H(+). The catalysed reaction is a medium-chain primary fatty alcohol + NADP(+) = a medium-chain fatty aldehyde + NADPH + H(+). It catalyses the reaction (2E,6Z)-nona-2,6-dien-1-ol + NADP(+) = (2E,6Z)-nona-2,6-dienal + NADPH + H(+). It carries out the reaction (E)-oct-2-en-1-ol + NADP(+) = (2E)-octenal + NADPH + H(+). The enzyme catalyses (E)-non-2-en-1-ol + NADP(+) = (E)-non-2-enal + NADPH + H(+). The catalysed reaction is heptan-1-ol + NADP(+) = heptanal + NADPH + H(+). It catalyses the reaction hexan-1-ol + NADP(+) = hexanal + NADPH + H(+). It carries out the reaction decan-1-ol + NADP(+) = decanal + NADPH + H(+). The enzyme catalyses nonan-1-ol + NADP(+) = nonanal + NADPH + H(+). The catalysed reaction is octan-1-ol + NADP(+) = octanal + NADPH + H(+). It catalyses the reaction (Z)-non-6-en-1-ol + NADP(+) = (Z)-non-6-enal + NADPH + H(+). Its pathway is cofactor metabolism; retinol metabolism. In terms of biological role, retinol dehydrogenase with a clear preference for NADP. Displays high activity towards 9-cis, 11-cis and all-trans-retinol, and to a lesser extent on 13-cis-retinol. Also exhibits reductive activity towards toxic lipid peroxidation products such as medium-chain aldehydes trans-2-nonenal, nonanal, and cis-6-nonenal. Has no dehydrogenase activity towards steroid. Seems to be required for homeostasis of retinol in liver and testis. This is Retinol dehydrogenase 11 (Rdh11) from Mus musculus (Mouse).